The primary structure comprises 628 residues: Hemocyanin II (628 aa).

At threonine 1 the chain carries Blocked amino end (Thr); partial. The Cu cation site is built by histidine 173, histidine 177, histidine 204, histidine 324, histidine 328, and histidine 364. Asparagine 449 is a glycosylation site (N-linked (GlcNAc...) asparagine). Intrachain disulfides connect cysteine 534–cysteine 576 and cysteine 536–cysteine 583.

Belongs to the tyrosinase family. Hemocyanin subfamily. As to quaternary structure, hexamer or a multiple thereof. As to expression, hemolymph.

It localises to the secreted. The protein localises to the extracellular space. Hemocyanins are copper-containing oxygen carriers occurring freely dissolved in the hemolymph of many mollusks and arthropods. In Limulus polyphemus (Atlantic horseshoe crab), this protein is Hemocyanin II.